The following is a 164-amino-acid chain: Aspartic proteinase nepenthesin-1 (164 aa).

The 148-residue stretch at 17–164 folds into the Peptidase A1 domain; that stretch reads YLMXLSIGTP…VSFVSAQCGA (148 aa). Aspartate 35 is a catalytic residue. A glycan (N-linked (GlcNAc...) asparagine) is linked at asparagine 93.

This sequence belongs to the peptidase A1 family. As to expression, parenchymal cells surrounding the secretory glands.

It localises to the secreted. The enzyme catalyses Similar to pepsin, but also cleaves on either side of Asp and at Lys-|-Arg.. With respect to regulation, inhibited by pepstatin and by diazoacetyl-D,L-norleucine methyl ester (DAN) in the presence of Cu(2+) ions. Its function is as follows. Extracellular proteinase found in the pitcher fluid of carnivorous plants. Digest prey for nitrogen uptake. This Nepenthes distillatoria (Pitcher plant) protein is Aspartic proteinase nepenthesin-1.